Consider the following 352-residue polypeptide: Small ribosomal subunit biogenesis GTPase RsgA (352 aa).

Residues 109–277 (DTVLKRPDMY…LIDSPGIREF (169 aa)) enclose the CP-type G domain. GTP is bound by residues 165–168 (NKAD) and 219–227 (GQSGVGKSS). Zn(2+)-binding residues include cysteine 301, cysteine 306, histidine 308, and cysteine 314.

It belongs to the TRAFAC class YlqF/YawG GTPase family. RsgA subfamily. In terms of assembly, monomer. Associates with 30S ribosomal subunit, binds 16S rRNA. Zn(2+) serves as cofactor.

It is found in the cytoplasm. In terms of biological role, one of several proteins that assist in the late maturation steps of the functional core of the 30S ribosomal subunit. Helps release RbfA from mature subunits. May play a role in the assembly of ribosomal proteins into the subunit. Circularly permuted GTPase that catalyzes slow GTP hydrolysis, GTPase activity is stimulated by the 30S ribosomal subunit. This Alcanivorax borkumensis (strain ATCC 700651 / DSM 11573 / NCIMB 13689 / SK2) protein is Small ribosomal subunit biogenesis GTPase RsgA.